The following is a 499-amino-acid chain: Calcium/calmodulin-dependent protein kinase type II subunit delta (499 aa).

Ala-2 bears the N-acetylalanine mark. The 259-residue stretch at 14–272 (YQLFEELGKG…ASEALKHPWI (259 aa)) folds into the Protein kinase domain. Residues 20–28 (LGKGAFSVV) and Lys-43 each bind ATP. The active-site Proton acceptor is Asp-136. The segment at 283–292 (HRQETVDCLK) is autoinhibitory domain. At Thr-287 the chain carries Phosphothreonine; by autocatalysis. Residues 291–301 (LKKFNARRKLK) form a calmodulin-binding region. Residues Thr-306 and Thr-307 each carry the phosphothreonine; by autocatalysis modification. Ser-315 is modified (phosphoserine). Lys-318 bears the N6-acetyllysine mark. A phosphoserine mark is found at Ser-319 and Ser-330. The residue at position 331 (Thr-331) is a Phosphothreonine. A Phosphoserine modification is found at Ser-333. Phosphothreonine is present on residues Thr-336 and Thr-337. Ser-404, Ser-490, and Ser-494 each carry phosphoserine.

It belongs to the protein kinase superfamily. CAMK Ser/Thr protein kinase family. CaMK subfamily. As to quaternary structure, CAMK2 is composed of 4 different chains: alpha (CAMK2A), beta (CAMK2B), gamma (CAMK2G), and delta (CAMK2D). The different isoforms assemble into homo- or heteromultimeric holoenzymes composed of 12 subunits with two hexameric rings stacked one on top of the other. Interacts with RRAD and CACNB2. In terms of processing, autophosphorylation of Thr-287 following activation by Ca(2+)/calmodulin. Phosphorylation of Thr-287 locks the kinase into an activated state. As to expression, expressed in cardiac muscle and skeletal muscle. Isoform Delta 3, isoform Delta 2, isoform Delta 8 and isoform Delta 9 are expressed in cardiac muscle. Isoform Delta 11 is expressed in skeletal muscle.

Its subcellular location is the cell membrane. The protein localises to the sarcolemma. The protein resides in the sarcoplasmic reticulum membrane. It catalyses the reaction L-seryl-[protein] + ATP = O-phospho-L-seryl-[protein] + ADP + H(+). The enzyme catalyses L-threonyl-[protein] + ATP = O-phospho-L-threonyl-[protein] + ADP + H(+). With respect to regulation, activated by Ca(2+)/calmodulin. Binding of calmodulin results in conformational change that relieves intrasteric autoinhibition and allows autophosphorylation of Thr-287 which turns the kinase in a constitutively active form and confers to the kinase a Ca(2+)-independent activity. In terms of biological role, calcium/calmodulin-dependent protein kinase involved in the regulation of Ca(2+) homeostatis and excitation-contraction coupling (ECC) in heart by targeting ion channels, transporters and accessory proteins involved in Ca(2+) influx into the myocyte, Ca(2+) release from the sarcoplasmic reticulum (SR), SR Ca(2+) uptake and Na(+) and K(+) channel transport. Targets also transcription factors and signaling molecules to regulate heart function. In its activated form, is involved in the pathogenesis of dilated cardiomyopathy and heart failure. Contributes to cardiac decompensation and heart failure by regulating SR Ca(2+) release via direct phosphorylation of RYR2 Ca(2+) channel on 'Ser-2808'. In the nucleus, phosphorylates the MEF2 repressor HDAC4, promoting its nuclear export and binding to 14-3-3 protein, and expression of MEF2 and genes involved in the hypertrophic program. Is essential for left ventricular remodeling responses to myocardial infarction. In pathological myocardial remodeling acts downstream of the beta adrenergic receptor signaling cascade to regulate key proteins involved in ECC. Regulates Ca(2+) influx to myocytes by binding and phosphorylating the L-type Ca(2+) channel subunit beta-2 CACNB2. In addition to Ca(2+) channels, can target and regulate the cardiac sarcolemmal Na(+) channel Nav1.5/SCN5A and the K+ channel Kv4.3/KCND3, which contribute to arrhythmogenesis in heart failure. Phosphorylates phospholamban (PLN/PLB), an endogenous inhibitor of SERCA2A/ATP2A2, contributing to the enhancement of SR Ca(2+) uptake that may be important in frequency-dependent acceleration of relaxation (FDAR) and maintenance of contractile function during acidosis. May participate in the modulation of skeletal muscle function in response to exercise, by regulating SR Ca(2+) transport through phosphorylation of PLN/PLB and triadin, a ryanodine receptor-coupling factor. In response to interferon-gamma (IFN-gamma) stimulation, catalyzes phosphorylation of STAT1, stimulating the JAK-STAT signaling pathway. In Homo sapiens (Human), this protein is Calcium/calmodulin-dependent protein kinase type II subunit delta (CAMK2D).